The sequence spans 263 residues: 3'-5' ssDNA/RNA exonuclease TatD (263 aa).

Residues Glu-91, His-127, and His-152 each coordinate a divalent metal cation.

Belongs to the metallo-dependent hydrolases superfamily. TatD-type hydrolase family. TatD subfamily. As to quaternary structure, monomer. Mg(2+) is required as a cofactor.

The protein localises to the cytoplasm. 3'-5' exonuclease that prefers single-stranded DNA and RNA. May play a role in the H(2)O(2)-induced DNA damage repair. The polypeptide is 3'-5' ssDNA/RNA exonuclease TatD (Citrobacter rodentium (strain ICC168) (Citrobacter freundii biotype 4280)).